A 191-amino-acid polypeptide reads, in one-letter code: Adenylate kinase (191 aa).

12-17 (GSGKTT) serves as a coordination point for ATP. Residues 34–63 (STGDLLRAESAKKTERGLLIEKFTSQGELV) form an NMP region. AMP-binding positions include threonine 35, arginine 40, 61–63 (ELV), 88–91 (GYPR), and glutamine 95. Residues 130–136 (GRSRGAD) are LID. Residue arginine 131 coordinates ATP. Arginine 133 and arginine 145 together coordinate AMP. ATP is bound at residue arginine 173.

This sequence belongs to the adenylate kinase family. Monomer.

It localises to the cytoplasm. The catalysed reaction is AMP + ATP = 2 ADP. The protein operates within purine metabolism; AMP biosynthesis via salvage pathway; AMP from ADP: step 1/1. In terms of biological role, catalyzes the reversible transfer of the terminal phosphate group between ATP and AMP. Plays an important role in cellular energy homeostasis and in adenine nucleotide metabolism. The protein is Adenylate kinase of Helicobacter pylori (strain Shi470).